The chain runs to 426 residues: MNKIAYLQCPTGISGDMCLGTLVSLGVPVAYLTEKLNNLGIAEEYKLRAEKVQRNGQEATKVHVDLLDHHHHDHEHHHHGRHLPEIEQMILQAGLPPRAEAWSLAVFRQLAVAEGSVHGIAPEKVHFHEVGAVDAIVDIVGTCLGLDWLGIASDNAGFPLLYCSAFPTGGGTVRAAHGQMAVPVPAVLKLWEMRGCPVYSNGIDRELVTPTGAAIATTLVKEFGAPPPMTIKQVGLGAGTINLPIPNILRLWLGESANLQANITDSAANSPTLETISVLETQIDDLNPQAIGYVFEQLFAVGALDVFTQPIGMKKSRPGILLTVICHPETLNDCEAVLFCETTTLGIRRTTQQRAVLQREFKPIQTKYGTVRIKIAWHGQSPEKVITNVQPEYEDCAELARKHKIPWREIQQLALQGWYESIQNSK.

It belongs to the LarC family.

This Nostoc sp. (strain PCC 7120 / SAG 25.82 / UTEX 2576) protein is Putative nickel insertion protein.